Reading from the N-terminus, the 162-residue chain is Phosphopantetheine adenylyltransferase (162 aa).

Ser-11 contributes to the substrate binding site. ATP contacts are provided by residues 11–12 and His-19; that span reads SF. Positions 43, 75, and 89 each coordinate substrate. ATP contacts are provided by residues 90-92, Glu-100, and 125-131; these read GLR and YAFLSSS.

Belongs to the bacterial CoaD family. Homohexamer. Mg(2+) is required as a cofactor.

Its subcellular location is the cytoplasm. The enzyme catalyses (R)-4'-phosphopantetheine + ATP + H(+) = 3'-dephospho-CoA + diphosphate. Its pathway is cofactor biosynthesis; coenzyme A biosynthesis; CoA from (R)-pantothenate: step 4/5. Its function is as follows. Reversibly transfers an adenylyl group from ATP to 4'-phosphopantetheine, yielding dephospho-CoA (dPCoA) and pyrophosphate. This Finegoldia magna (strain ATCC 29328 / DSM 20472 / WAL 2508) (Peptostreptococcus magnus) protein is Phosphopantetheine adenylyltransferase.